Here is a 389-residue protein sequence, read N- to C-terminus: Alcohol dehydrogenase-like 5 (389 aa).

Zn(2+) contacts are provided by Cys54, Thr56, His77, Cys107, Cys110, Cys113, Cys121, and Cys186. The an alcohol site is built by Thr56 and His77. Thr56 is a binding site for NAD(+). Residues 211 to 216 (GLGAVG), Asp235, Lys240, 305 to 307 (LGI), Phe332, and Arg382 contribute to the NAD(+) site.

This sequence belongs to the zinc-containing alcohol dehydrogenase family. Class-III subfamily. In terms of assembly, homodimer. Zn(2+) is required as a cofactor.

It localises to the cytoplasm. It carries out the reaction a primary alcohol + NAD(+) = an aldehyde + NADH + H(+). The catalysed reaction is a secondary alcohol + NAD(+) = a ketone + NADH + H(+). In Arabidopsis thaliana (Mouse-ear cress), this protein is Alcohol dehydrogenase-like 5.